We begin with the raw amino-acid sequence, 420 residues long: MGQETEISKRYQVAKERYQAIGVDTEKALKTLKDIKISMHCWQGDDVKGFLNPDGELTGGIMATGNYPGAAHTPKQLRQDLEKAYSLIPGKHKLNLHAIYVDTDEKVDLNEIEPKHFTPWVEWAKEQGLGLDFNPTFFSHPMFKDNYTLASPDKEVRDFWIEHGKRSRKISEYFGKELGQTSINNFWVPDGIKDCPIDRYTPRKRLMEALDEVFAEKLDEKYTQEAVESKLFGLGAEAYTVGSHEFYMGYGITRDKLICLDAGHFHPTEVISNKLSSLALFSKGVMLHVSRPVRWDSDHVVIMDDELIEIGRELVRNDLLGITNIGLDFFDATINRIAAWVVGTRNTQKSLLKALLEPTADLKKMELENDFTSRMAITEELKDFPFGDVWNYFCEINGVPVGLDWLKEVKAYEEDVLLKR.

H264, D296, and D298 together coordinate Mn(2+).

The protein belongs to the rhamnose isomerase family. Mn(2+) is required as a cofactor.

It is found in the cytoplasm. It catalyses the reaction L-rhamnopyranose = L-rhamnulose. Its pathway is carbohydrate degradation; L-rhamnose degradation; glycerone phosphate from L-rhamnose: step 1/3. Its function is as follows. Catalyzes the interconversion of L-rhamnose and L-rhamnulose. In Listeria monocytogenes serotype 4b (strain CLIP80459), this protein is L-rhamnose isomerase.